We begin with the raw amino-acid sequence, 190 residues long: Nucleoside triphosphate pyrophosphatase (190 aa).

Catalysis depends on Asp-69, which acts as the Proton acceptor.

It belongs to the Maf family. Requires a divalent metal cation as cofactor.

Its subcellular location is the cytoplasm. It catalyses the reaction a ribonucleoside 5'-triphosphate + H2O = a ribonucleoside 5'-phosphate + diphosphate + H(+). It carries out the reaction a 2'-deoxyribonucleoside 5'-triphosphate + H2O = a 2'-deoxyribonucleoside 5'-phosphate + diphosphate + H(+). In terms of biological role, nucleoside triphosphate pyrophosphatase. May have a dual role in cell division arrest and in preventing the incorporation of modified nucleotides into cellular nucleic acids. The protein is Nucleoside triphosphate pyrophosphatase of Helicobacter pylori (strain HPAG1).